Consider the following 147-residue polypeptide: Ribonuclease P protein component (147 aa).

Positions 117–147 are disordered; it reads TRPRGQSSHRTRASREATSAHTTAVGEQPTQ.

The protein belongs to the RnpA family. As to quaternary structure, consists of a catalytic RNA component (M1 or rnpB) and a protein subunit.

The catalysed reaction is Endonucleolytic cleavage of RNA, removing 5'-extranucleotides from tRNA precursor.. In terms of biological role, RNaseP catalyzes the removal of the 5'-leader sequence from pre-tRNA to produce the mature 5'-terminus. It can also cleave other RNA substrates such as 4.5S RNA. The protein component plays an auxiliary but essential role in vivo by binding to the 5'-leader sequence and broadening the substrate specificity of the ribozyme. The sequence is that of Ribonuclease P protein component from Thermobifida fusca (strain YX).